A 469-amino-acid polypeptide reads, in one-letter code: RNA-editing ligase 1, mitochondrial (469 aa).

Residues 1–44 constitute a mitochondrion transit peptide; that stretch reads MQLQRLGAPLLKRLVGGCIRQSTAPIMPCVVVSGSGVFLTPVRT. Residues 59 to 61, 86 to 92, Arg111, Glu159, Phe209, and 307 to 309 each bind ATP; these read IEI, EKVHGTN, and KLR. Lys87 acts as the N6-AMP-lysine intermediate in catalysis. Residues 450–469 are disordered; the sequence is AAAQSEAIPPLSPAAPTKGE.

This sequence belongs to the RNA ligase 2 family. As to quaternary structure, component of the RNA editing complex (editosome), a 1600 kDa complex composed of at least 20 proteins. Interacts with terminal uridylyltransferase MEAT1.

The protein localises to the mitochondrion. The enzyme catalyses ATP + (ribonucleotide)n-3'-hydroxyl + 5'-phospho-(ribonucleotide)m = (ribonucleotide)n+m + AMP + diphosphate.. Its function is as follows. Essential for RNA editing. RNA editing in kinetoplastid mitochondria inserts and deletes uridylates at multiple sites in pre-mRNAs as directed by guide RNAs. The chain is RNA-editing ligase 1, mitochondrial (REL1) from Trypanosoma brucei brucei.